The following is a 627-amino-acid chain: tRNA uridine 5-carboxymethylaminomethyl modification enzyme MnmG (627 aa).

Residues 13-18, Val-125, and Ser-180 each bind FAD; that span reads GGGHAG. 274 to 288 provides a ligand contact to NAD(+); sequence GPRYCPSIEDKVVRF. Gln-371 serves as a coordination point for FAD.

Belongs to the MnmG family. As to quaternary structure, homodimer. Heterotetramer of two MnmE and two MnmG subunits. It depends on FAD as a cofactor.

It is found in the cytoplasm. In terms of biological role, NAD-binding protein involved in the addition of a carboxymethylaminomethyl (cmnm) group at the wobble position (U34) of certain tRNAs, forming tRNA-cmnm(5)s(2)U34. The protein is tRNA uridine 5-carboxymethylaminomethyl modification enzyme MnmG of Francisella tularensis subsp. holarctica (strain FTNF002-00 / FTA).